A 127-amino-acid polypeptide reads, in one-letter code: Cytochrome c' (127 aa).

A Pyrrolidone carboxylic acid modification is found at glutamine 1. The heme c site is built by arginine 12, glutamine 13, aspartate 67, cysteine 116, cysteine 119, and histidine 120.

In terms of assembly, homodimer. In terms of processing, binds 1 heme c group covalently per subunit.

The protein resides in the periplasm. In terms of biological role, cytochrome c' is the most widely occurring bacterial c-type cytochrome. Cytochromes c' are high-spin proteins and the heme has no sixth ligand. Their exact function is not known. The chain is Cytochrome c' from Alcaligenes xylosoxydans xylosoxydans (Achromobacter xylosoxidans).